Consider the following 192-residue polypeptide: Large ribosomal subunit protein uL10 (192 aa).

Belongs to the universal ribosomal protein uL10 family. Part of the ribosomal stalk of the 50S ribosomal subunit. The N-terminus interacts with L11 and the large rRNA to form the base of the stalk. The C-terminus forms an elongated spine to which L12 dimers bind in a sequential fashion forming a multimeric L10(L12)X complex.

Forms part of the ribosomal stalk, playing a central role in the interaction of the ribosome with GTP-bound translation factors. The protein is Large ribosomal subunit protein uL10 of Gloeobacter violaceus (strain ATCC 29082 / PCC 7421).